The following is a 467-amino-acid chain: Congo red hypersensitive protein 2 (467 aa).

The N-terminal stretch at 1-23 (MAIVNSWLICLVSIFSFVVRVEA) is a signal peptide. Asparagine 28 carries N-linked (GlcNAc...) asparagine glycosylation. A disulfide bridge connects residues cysteine 56 and cysteine 67. The GH16 domain maps to 63–280 (SHDSCMPVPI…WSGGEINWDA (218 aa)). A glycan (N-linked (GlcNAc...) asparagine) is linked at asparagine 96. Catalysis depends on glutamate 166, which acts as the Nucleophile. Residue glutamate 170 is the Proton donor of the active site. A chitin-binding site is contributed by glutamate 170. N-linked (GlcNAc...) asparagine glycans are attached at residues asparagine 190, asparagine 196, asparagine 233, and asparagine 237. Position 257 (tryptophan 257) interacts with chitin. A glycan (N-linked (GlcNAc...) asparagine) is linked at asparagine 261. Threonine 268 is a chitin binding site. Asparagine 297 and asparagine 310 each carry an N-linked (GlcNAc...) asparagine glycan. The tract at residues 337 to 444 (MDSDEGSGLD…SSSTSSMSGN (108 aa)) is disordered. The span at 351–444 (ATTSSTQKSS…SSSTSSMSGN (94 aa)) shows a compositional bias: low complexity. A lipid anchor (GPI-anchor amidated asparagine) is attached at asparagine 445. Residues 446–467 (AGANVAANWRLTVLCVILGYVL) constitute a propeptide, removed in mature form.

This sequence belongs to the glycosyl hydrolase 16 family. CRH1 subfamily. Post-translationally, the GPI-anchor is attached to the protein in the endoplasmic reticulum and serves to target the protein to the cell surface. There, the glucosamine-inositol phospholipid moiety is cleaved off and the GPI-modified mannoprotein is covalently attached via its lipidless GPI glycan remnant to the 1,6-beta-glucan of the outer cell wall layer.

The protein resides in the secreted. It localises to the cell wall. It is found in the membrane. It carries out the reaction Random endo-hydrolysis of N-acetyl-beta-D-glucosaminide (1-&gt;4)-beta-linkages in chitin and chitodextrins.. Its function is as follows. Dual chitinase/transglycosylase that plays a role in cell wall architecture. Chitinase and transglycosylase activities are coupled. Required for the polysaccharide cross-linking at the septa and the cell wall. More specifically, transfers chitin to both beta(1-3)- and beta(1-6)glucan in the cell wall. The minimal number of intact hexopyranose units required in the molecule of the acceptor oligosaccharide is two and the effectivity of the acceptor increased with the increasing length of its oligosaccharide chain. This chain is Congo red hypersensitive protein 2, found in Saccharomyces cerevisiae (strain ATCC 204508 / S288c) (Baker's yeast).